The following is a 226-amino-acid chain: Neuron-specific vesicular protein calcyon (226 aa).

The tract at residues 1–21 is disordered; that stretch reads MVKLGCSFSGKPGKEAGDQDG. At 1 to 88 the chain is on the extracellular side; the sequence is MVKLGCSFSG…EEGRRLPTAR (88 aa). A helical membrane pass occupies residues 89 to 109; it reads MIAFAMALLGCVLIMYKAIWY. The Cytoplasmic segment spans residues 110-226; it reads DQFTCPDGFL…AEGVPSQPPK (117 aa). The interval 177–226 is disordered; the sequence is HKGTTPAAMAVSTAAAAAAAEGTEPSGKSLDTREKEDPQKAEGVPSQPPK. Low complexity predominate over residues 183–196; the sequence is AAMAVSTAAAAAAA. Residues 206–216 are compositionally biased toward basic and acidic residues; that stretch reads LDTREKEDPQK.

It belongs to the NSG family. In terms of assembly, interacts with CLTA. Most abundant in brain. Also expressed in testis and ovary and, at much lower levels, in kidney and heart.

It is found in the cytoplasmic vesicle membrane. The protein localises to the cell membrane. Functionally, interacts with clathrin light chain A and stimulates clathrin self-assembly and clathrin-mediated endocytosis. The polypeptide is Neuron-specific vesicular protein calcyon (Caly) (Mus musculus (Mouse)).